Here is a 374-residue protein sequence, read N- to C-terminus: tRNA (guanine(26)-N(2))-dimethyltransferase (374 aa).

The 367-residue stretch at 1-367 folds into the Trm1 methyltransferase domain; that stretch reads MILKEGEVVF…ATLKNVIEAI (367 aa). Positions 34, 66, 86, 113, and 114 each coordinate S-adenosyl-L-methionine.

It belongs to the class I-like SAM-binding methyltransferase superfamily. Trm1 family.

It carries out the reaction guanosine(26) in tRNA + 2 S-adenosyl-L-methionine = N(2)-dimethylguanosine(26) in tRNA + 2 S-adenosyl-L-homocysteine + 2 H(+). Its function is as follows. Dimethylates a single guanine residue at position 26 of a number of tRNAs using S-adenosyl-L-methionine as donor of the methyl groups. In Methanocaldococcus jannaschii (strain ATCC 43067 / DSM 2661 / JAL-1 / JCM 10045 / NBRC 100440) (Methanococcus jannaschii), this protein is tRNA (guanine(26)-N(2))-dimethyltransferase.